We begin with the raw amino-acid sequence, 1773 residues long: MLFIESAFLVLTSLSAAEAATPFEGGVKQKVFHSAGHIDDFIVSRDQQTIYIASINRITSLHSSNLSIQNEVSIGPVQDSPWCSADGKSCLKDNRPFSTDVHTKILQILPSGQLLQCGSVKLGSCSTFNSKLSLITEASTPVAANSPDASTVSQIIDNRLVVAASPTKESPGCNPNLPGLNVENAGDLEGEAAVYLRAAYRSSFRFVTTFSHQHFIFVVATVTPRETRLPVTTRLIRFCKNDTKFVSYSEIELQCRGEDNTNYPFLTAVVQTGDKLIASFSASPTSSKNSICVFSMQKVKLTFWYNVDRCRSGTDSIKLSHIGRDTKCVNKAHIPLDEDSCELGVGGSIELVEMSTIDVLAKVTSLMAVDQKALFAGTSSSQIVMLKWDEQNSNKLEEYGRKEIGDGRTGSEVVKMTRFGDFILVQMPYGIVMEELSTCAHHESCTDCQVSVDPLCQWCHPTQSCTTSSRCSGPLTTQCPIVDGDPIPSMVSVNSSTSISFNIHHLPPPVGFVYKCYFGSKSHSKSTKATWTASGISCPSEMFGSPKTFEISLMTSISKNPISRHNFTVFDCAGYSTCSTCMSSEFGCQWCSHKCSSSCGSASAKACVKIQPMKVPIAIGSQQEIVLEALNLDTLDRKTEHFCKVNGQVAPAKIASDSIRCGKIQLAGSNETNANMVVPLSLMANDVVVDIANVSLYSCSNLAADCSSCLALSPSLSCGWCNRKCSHECHESKATAVCDPPKIDRFEPSSGPVEGGTVIKVYGNDLGMSVEDVRGKIYVAGSRCNIVEYQVSNMIACQVDKGVSSGPIKISVGRATMAVAESSDLFSFVRVSIFSAYPLYGPISGGTRITLYGQNLSSGSRISVTVGGLPCPIERINSSTVLTCLTPSGSSIGKSAKVVVHVDHSQIQLDQPFEYRSDPSVNSIFPLSSFKAGGRIVSVQGSSFNTVQSARMFLISSPTPPFEIISDLAPCHIINSTLMTCMTPKILETITRRVEYTRQPVGFLMDNVTAVANLGRRIQMSVYPNPSLSPFKGIRYHQGEQSLILEGHNLNLAAEPNDFKIFVGSERCYVTLVDVRQLVCSGPLKQPKPTDERGVPINGDNPLVTVIVGSLRMELGLIEYSDHALPSRLSFLILGLLLFTVITLIVMCLIFKRRRQEREKEYRKIQLQMENLENNVRKECKQAFAELQTNLVLSPKSTGTITSPELIHFPHFVENLLWADQNLTSAPSLARTLPVTLAQFHALLSFKGFIFTIVEAAESDVSISTSEKSTLASLLISVLLRNFSYCTEIVVDLLKAHIARSVQAKRAELLFRNSDSVVEKMFSKWMSICLYSHLTPQMNSYFYLYKALQYQTDKGPVDAVTGDARYTINEAKLLRESVETKTLKIHIVPFEKCDETTHLEVHACDAICQLKQKVASAVYKETPYSQRPRITQFELKLKCAKRGDIKLTDVSAVETLSQKKLPVKLLTLADYGIQDGATLEMTSAVYTAESYRNSLADSGQSSWSSLDRCSPIYSSSKYYHLTNPSSGTMTFKKRTSPSEIPKSIPEVYLTRLLTSKGTVETYVEDFLESVLYMHDSSYPPILKFFFDILDREASINGVSENICQQWKANGYVLRMWTNFVKNPQLVFDVPHSVSMDANLSTVAQTMMDCFSFSEPVLGAHSPSSRLLFAKDVARLRPLSVDLFKRVKNSPPLGMEELRTELVNMANDVSTCKGSSLALSELLSWVRGNGIRISQLLSSNQETSQQRLPQKLSQVLHVCLETDNHIYSTISDYD.

A signal peptide spans 1-19 (MLFIESAFLVLTSLSAAEA). The Sema domain occupies 20 to 436 (ATPFEGGVKQ…MPYGIVMEEL (417 aa)). The Extracellular portion of the chain corresponds to 20-1130 (ATPFEGGVKQ…SDHALPSRLS (1111 aa)). The N-linked (GlcNAc...) asparagine glycan is linked to N65. 9 disulfide bridges follow: C83-C90, C117-C125, C239-C341, C255-C292, C310-C328, C439-C456, C445-C479, C448-C465, and C459-C471. A glycan (N-linked (GlcNAc...) asparagine) is linked at N241. One can recognise a PSI 1 domain in the interval 438–480 (TCAHHESCTDCQVSVDPLCQWCHPTQSCTTSSRCSGPLTTQCP). A glycan (N-linked (GlcNAc...) asparagine) is linked at N494. C516 and C538 are disulfide-bonded. N-linked (GlcNAc...) asparagine glycosylation occurs at N566. The PSI 2 domain occupies 571–608 (DCAGYSTCSTCMSSEFGCQWCSHKCSSSCGSASAKACV). N-linked (GlcNAc...) asparagine glycans are attached at residues N670 and N693. Residues 698–739 (SCSNLAADCSSCLALSPSLSCGWCNRKCSHECHESKATAVCD) enclose the PSI 3 domain. IPT/TIG domains lie at 741–829 (PKID…FSFV), 831–916 (VSIF…FEYR), and 919–1006 (PSVN…FLMD). N-linked (GlcNAc...) asparagine glycans are attached at residues N855, N877, N975, and N1007. The chain crosses the membrane as a helical span at residues 1131 to 1151 (FLILGLLLFTVITLIVMCLIF). Residues 1150 to 1188 (IFKRRRQEREKEYRKIQLQMENLENNVRKECKQAFAELQ) are a coiled coil. Over 1152–1764 (KRRRQEREKE…LHVCLETDNH (613 aa)) the chain is Cytoplasmic.

Belongs to the plexin family. As to quaternary structure, interacts with mab-20.

Its subcellular location is the cell membrane. In terms of biological role, involved as a receptor for mab-20/sema-2a in the formation or stabilization of cell-cell contacts at several stages of epithelial morphogenesis. In early embryonic development, required for proper ventral closure of the epidermis. During male tail morphogenesis, involved in precursor cell sorting and in the formation of distinct sensory rays. Involved in axon guidance of SDQL neurons during neurogenesis. The sequence is that of Plexin-2 (plx-2) from Caenorhabditis briggsae.